The sequence spans 1255 residues: Cilia- and flagella-associated protein 337 B (1255 aa).

The region spanning 87-122 (KLVRCLTNLFEEIDLNGNGILEWDEFTNYVIEKATV) is the EF-hand domain. The Ca(2+) site is built by D100, N102, N104, and E111. WD repeat units follow at residues 228-269 (DLKT…WVLA), 282-322 (EFKN…KELE), 326-365 (AHTE…KKRV), 368-407 (EHTR…LIYK), 410-449 (GHSS…NVQC), 496-536 (VDDY…KIFS), 538-577 (VTQG…MIKA), 580-624 (KHSA…RTLE), 625-664 (LKDV…QNGS), 669-708 (TQYE…FKFQ), 769-808 (QQNL…TILE), and 844-883 (AHYE…LIDQ). Disordered stretches follow at residues 941–988 (IKSL…NFNP) and 1140–1160 (QQQV…QQPG). A compositionally biased stretch (low complexity) spans 953 to 969 (TQESSTQEQEAAQQPQQ). A compositionally biased stretch (polar residues) spans 1148–1160 (TEPSSNRSHQQPG).

Belongs to the CFAP337 family. Associates with components of the nexin-dynein regulatory complex (N-DRC) and the CFAP184:CFAP263 complex.

It is found in the cell projection. Its subcellular location is the cilium. Its function is as follows. Associates with components of the nexin-dynein regulatory complex (N-DRC), a key regulator of ciliary/flagellar motility, and might act as an inner dynein arm (IDA) hub or linkage. The chain is Cilia- and flagella-associated protein 337 B from Tetrahymena thermophila (strain SB210).